The chain runs to 461 residues: Phosphomethylpyrimidine synthase (461 aa).

Substrate-binding positions include N80, M109, Y139, H175, 195-197 (SRG), 236-239 (DSLR), and E275. H279 contributes to the Zn(2+) binding site. Y302 contributes to the substrate binding site. Position 343 (H343) interacts with Zn(2+). The [4Fe-4S] cluster site is built by C423, C426, and C431.

This sequence belongs to the ThiC family. [4Fe-4S] cluster is required as a cofactor.

The enzyme catalyses 5-amino-1-(5-phospho-beta-D-ribosyl)imidazole + S-adenosyl-L-methionine = 4-amino-2-methyl-5-(phosphooxymethyl)pyrimidine + CO + 5'-deoxyadenosine + formate + L-methionine + 3 H(+). It participates in cofactor biosynthesis; thiamine diphosphate biosynthesis. Catalyzes the synthesis of the hydroxymethylpyrimidine phosphate (HMP-P) moiety of thiamine from aminoimidazole ribotide (AIR) in a radical S-adenosyl-L-methionine (SAM)-dependent reaction. The sequence is that of Phosphomethylpyrimidine synthase from Picosynechococcus sp. (strain ATCC 27264 / PCC 7002 / PR-6) (Agmenellum quadruplicatum).